A 1577-amino-acid chain; its full sequence is Dynamin-binding protein (1577 aa).

The residue at position 1 (M1) is an N-acetylmethionine. 4 SH3 domains span residues E2–I61, E66–L126, Y145–P204, and E243–D302. 2 disordered regions span residues S211–P244 and E335–P395. The span at V230 to P244 shows a compositional bias: acidic residues. Over residues E335 to H344 the composition is skewed to basic and acidic residues. A Phosphoserine modification is found at S496. Disordered stretches follow at residues G591–H624 and V639–S659. The segment covering V639–P649 has biased composition (pro residues). At S684 the chain carries Phosphoserine. A coiled-coil region spans residues L693–L757. Residues K784–Y967 enclose the DH domain. In terms of domain architecture, BAR spans L1008–L1217. The stretch at E1136–Q1173 forms a coiled coil. In terms of domain architecture, SH3 5 spans P1285 to P1348. The segment at P1348–Q1487 is disordered. The segment covering R1376–D1405 has biased composition (polar residues). Positions S1419–S1442 are enriched in low complexity. An SH3 6 domain is found at E1513 to Y1576.

Binds DNM1 via its N-terminal SH3 domains. The C-terminal SH3 domain binds a complex containing actin, tubulin, Hsp70 and actin-regulatory proteins, such as ENAH, EVL, WIRE, CR16, WAVE1 and NAP1L1. Interacts with FASLG. Interacts (via SH3 domain 6) with WASL. Interacts (via SH3 domain 6) interacts with ENAH. Interacts (via C-terminal domain) with TJP1; required for the apical cell-cell junction localization of DNMBP. In terms of assembly, (Microbial infection) Interacts (via SH3 domain 6) with L.monocytogenes InlC. In terms of tissue distribution, detected in heart, brain, lung, liver, skeletal muscle, kidney and pancreas.

The protein resides in the cytoplasm. The protein localises to the golgi apparatus. It localises to the golgi stack. It is found in the cytoskeleton. Its subcellular location is the synapse. The protein resides in the cell junction. Plays a critical role as a guanine nucleotide exchange factor (GEF) for CDC42 in several intracellular processes associated with the actin and microtubule cytoskeleton. Regulates the structure of apical junctions through F-actin organization in epithelial cells. Participates in the normal lumenogenesis of epithelial cell cysts by regulating spindle orientation. Plays a role in ciliogenesis. May play a role in membrane trafficking between the cell surface and the Golgi. The chain is Dynamin-binding protein from Homo sapiens (Human).